Here is an 856-residue protein sequence, read N- to C-terminus: DNA mismatch repair protein MutS (856 aa).

Position 623–630 (623–630) interacts with ATP; that stretch reads GPNMSGKS.

This sequence belongs to the DNA mismatch repair MutS family.

Functionally, this protein is involved in the repair of mismatches in DNA. It is possible that it carries out the mismatch recognition step. This protein has a weak ATPase activity. The chain is DNA mismatch repair protein MutS from Natronomonas pharaonis (strain ATCC 35678 / DSM 2160 / CIP 103997 / JCM 8858 / NBRC 14720 / NCIMB 2260 / Gabara) (Halobacterium pharaonis).